The sequence spans 637 residues: Poly(A) polymerase beta (637 aa).

Low complexity predominate over residues Met1–Gly10. Positions Met1–Val23 are disordered. Residues Phe101–Ser103, Thr110, Asp114–Asp116, Asp168, Lys229, Tyr238, and Gly247–Val248 each bind ATP. Residues Asp114, Asp116, and Asp168 each coordinate Mg(2+). The segment at Ser535–Arg555 is disordered.

The protein belongs to the poly(A) polymerase family. In terms of assembly, interacts with GSG1. Mg(2+) serves as cofactor. Requires Mn(2+) as cofactor. As to expression, testis specific.

It localises to the nucleus. It carries out the reaction RNA(n) + ATP = RNA(n)-3'-adenine ribonucleotide + diphosphate. This Homo sapiens (Human) protein is Poly(A) polymerase beta.